Reading from the N-terminus, the 178-residue chain is Adenine phosphoribosyltransferase (178 aa).

It belongs to the purine/pyrimidine phosphoribosyltransferase family. In terms of assembly, homodimer.

The protein resides in the cytoplasm. The catalysed reaction is AMP + diphosphate = 5-phospho-alpha-D-ribose 1-diphosphate + adenine. The protein operates within purine metabolism; AMP biosynthesis via salvage pathway; AMP from adenine: step 1/1. Its function is as follows. Catalyzes a salvage reaction resulting in the formation of AMP, that is energically less costly than de novo synthesis. The protein is Adenine phosphoribosyltransferase of Bacteroides fragilis (strain ATCC 25285 / DSM 2151 / CCUG 4856 / JCM 11019 / LMG 10263 / NCTC 9343 / Onslow / VPI 2553 / EN-2).